A 627-amino-acid polypeptide reads, in one-letter code: Sphingomyelin phosphodiesterase (627 aa).

A signal peptide spans 1–44 (MPHHRASSGQDHLRAGWEQRLERSLPAPRVGLLWMGLGLALVLA). In terms of domain architecture, Saposin B-type spans 83-167 (QNLTCPACKV…LLGSSCGHWD (85 aa)). Residue N84 is glycosylated (N-linked (GlcNAc...) asparagine). 3 disulfides stabilise this stretch: C87–C163, C90–C155, and C118–C129. N173 carries an N-linked (GlcNAc...) asparagine glycan. D204 and H206 together coordinate Zn(2+). 2 disulfide bridges follow: C219/C224 and C225/C248. Zn(2+) contacts are provided by D276 and N316. N-linked (GlcNAc...) asparagine glycosylation is found at N333 and N393. C383 and C429 are disulfide-bonded. Zn(2+) contacts are provided by H423, H455, and H457. Position 506 is a phosphoserine (S506). N518 carries N-linked (GlcNAc...) asparagine glycosylation. 2 disulfides stabilise this stretch: C582–C586 and C592–C605. N611 carries N-linked (GlcNAc...) asparagine glycosylation.

It belongs to the acid sphingomyelinase family. In terms of assembly, monomer. Interacts with SORT1; the interaction is required for SMPD1 targeting to lysosomes. The cofactor is Zn(2+). In terms of processing, proteolytically processed. Mature lysosomal form arises from C-terminal proteolytic processing of pro-sphingomyelin phosphodiesterase. Both lysosomal and secreted forms are glycosylated but they show a differential pattern of glycosylation. Post-translationally, phosphorylated at Ser-506 by PRKCD upon stress stimuli. Phosphorylation is required for secretion. In terms of processing, this form is generated following cleavage by CASP7 in the extracellular milieu. It shows increased activity.

The protein localises to the lysosome. Its subcellular location is the lipid droplet. It localises to the secreted. It is found in the extracellular space. The enzyme catalyses a sphingomyelin + H2O = phosphocholine + an N-acylsphing-4-enine + H(+). It catalyses the reaction N-(octadecanoyl)-sphing-4-enine-1-phosphocholine + H2O = N-octadecanoylsphing-4-enine + phosphocholine + H(+). The catalysed reaction is a 1,2-diacyl-sn-glycero-3-phosphocholine + H2O = phosphocholine + a 1,2-diacyl-sn-glycerol + H(+). It carries out the reaction 1,2-dihexadecanoyl-sn-glycero-3-phosphocholine + H2O = 1,2-dihexadecanoyl-sn-glycerol + phosphocholine + H(+). With respect to regulation, hydrolysis of liposomal sphingomyelin is stimulated by incorporation of diacylglycerol (DAG), ceramide and free fatty acids into the liposomal membranes. Phosphatidylcholine hydrolysis is inhibited by incorporation of cholesterol, ceramide, DAG, monoacylglycerol and fatty acids. Functionally, converts sphingomyelin to ceramide. Exists as two enzymatic forms that arise from alternative trafficking of a single protein precursor, one that is targeted to the endolysosomal compartment, whereas the other is released extracellularly. However, in response to various forms of stress, lysosomal exocytosis may represent a major source of the secretory form. In the lysosomes, converts sphingomyelin to ceramide. Plays an important role in the export of cholesterol from the intraendolysosomal membranes. Also has phospholipase C activities toward 1,2-diacylglycerolphosphocholine and 1,2-diacylglycerolphosphoglycerol. Modulates stress-induced apoptosis through the production of ceramide. In terms of biological role, when secreted, modulates cell signaling with its ability to reorganize the plasma membrane by converting sphingomyelin to ceramide. Secreted form is increased in response to stress and inflammatory mediators such as IL1B, IFNG or TNF as well as upon infection with bacteria and viruses. Produces the release of ceramide in the outer leaflet of the plasma membrane playing a central role in host defense. Ceramide reorganizes these rafts into larger signaling platforms that are required to internalize P.aeruginosa, induce apoptosis and regulate the cytokine response in infected cells. In wounded cells, the lysosomal form is released extracellularly in the presence of Ca(2+) and promotes endocytosis and plasma membrane repair. Its function is as follows. This form is generated following cleavage by CASP7 in the extracellular milieu in response to bacterial infection. It shows increased ability to convert sphingomyelin to ceramide and promotes plasma membrane repair. Plasma membrane repair by ceramide counteracts the action of gasdermin-D (GSDMD) perforin (PRF1) pores that are formed in response to bacterial infection. Functionally, (Microbial infection) Secretion is activated by bacteria such as P.aeruginosa, this activation results in the release of ceramide in the outer leaflet of the plasma membrane which facilitates the infection. The chain is Sphingomyelin phosphodiesterase from Mus musculus (Mouse).